The following is a 478-amino-acid chain: Chromosomal replication initiator protein DnaA (478 aa).

A domain I, interacts with DnaA modulators region spans residues 1–71 (MNLTHIWKTT…RNALTRVVGY (71 aa)). Positions 71–136 (YPVQVQVLIA…LDLASAMRSG (66 aa)) are domain II. Residues 137 to 353 (MLNPRYTFAS…GSLNRVAAYA (217 aa)) form a domain III, AAA+ region region. Positions 181, 183, 184, and 185 each coordinate ATP. The interval 354 to 478 (ELNRLPITID…RERIQMMRGL (125 aa)) is domain IV, binds dsDNA.

Belongs to the DnaA family. As to quaternary structure, oligomerizes as a right-handed, spiral filament on DNA at oriC.

The protein resides in the cytoplasm. Its function is as follows. Plays an essential role in the initiation and regulation of chromosomal replication. ATP-DnaA binds to the origin of replication (oriC) to initiate formation of the DNA replication initiation complex once per cell cycle. Binds the DnaA box (a 9 base pair repeat at the origin) and separates the double-stranded (ds)DNA. Forms a right-handed helical filament on oriC DNA; dsDNA binds to the exterior of the filament while single-stranded (ss)DNA is stabiized in the filament's interior. The ATP-DnaA-oriC complex binds and stabilizes one strand of the AT-rich DNA unwinding element (DUE), permitting loading of DNA polymerase. After initiation quickly degrades to an ADP-DnaA complex that is not apt for DNA replication. Binds acidic phospholipids. This chain is Chromosomal replication initiator protein DnaA, found in Chloroflexus aggregans (strain MD-66 / DSM 9485).